Reading from the N-terminus, the 74-residue chain is IMFVWASAAEVEERGSDQRDSPASLKSMETIFQSEQRECRYLMGGCSKDGDCCEHLVCRTKWPYHCVWDWTFGK.

Positions 1 to 7 (IMFVWAS) are cleaved as a signal peptide. Residues 8-36 (AAEVEERGSDQRDSPASLKSMETIFQSEQ) constitute a propeptide that is removed on maturation. Disulfide bonds link C39–C53, C46–C58, and C52–C66.

The protein belongs to the neurotoxin 10 (Hwtx-1) family. 38 (Jztx-33) subfamily. As to expression, expressed by the venom gland.

Its subcellular location is the secreted. Probable ion channel inhibitor. In Chilobrachys guangxiensis (Chinese earth tiger tarantula), this protein is U19-theraphotoxin-Cg1a.